The sequence spans 107 residues: Bombesin (107 aa).

An N-terminal signal peptide occupies residues 1–26; it reads MSAIPLNRILPLGFLLIFSFISLSSC. A propeptide spanning residues 27 to 41 is cleaved from the precursor; the sequence is MEFVEDPNNQGGLNL. Glutamine 42 carries the pyrrolidone carboxylic acid modification. Methionine amide is present on methionine 55. The propeptide occupies 56 to 107; it reads GKKSLQDTDFEEMESFAKRNVENMKAESERELRHAQLVVRNILEQYLKNMQN.

Expressed by the skin glands.

Its subcellular location is the secreted. Stimulates smooth muscle contraction. Role in induction of hypothermia, stimulation of DNA replication and release of many gastrointestinal hormones. Possesses insulin-releasing activity. In Bombina variegata (Yellow-bellied toad), this protein is Bombesin.